The sequence spans 512 residues: Gasdermin-E (512 aa).

The tract at residues 1–56 (MFAKATRNFLKEVDAGGDLISVSHLNDSDKLQLLSLVTKKKRYWCWQRPKYQILSA) is membrane targeting domain. The residue at position 45 (Cys45) is an S-(2-succinyl)cysteine. A Glycyl lysine isopeptide (Lys-Gly) (interchain with G-Cter in ubiquitin) cross-link involves residue Lys120. Residues Cys156, Cys168, and Cys180 each carry the S-(2-succinyl)cysteine modification. Lys189 is covalently cross-linked (Glycyl lysine isopeptide (Lys-Gly) (interchain with G-Cter in ubiquitin)). S-(2-succinyl)cysteine is present on residues Cys235, Cys411, and Cys420.

It belongs to the gasdermin family. Homooligomer; homooligomeric ring-shaped pore complex containing 27-28 subunits when inserted in the membrane. Post-translationally, cleavage at Asp-270 by CASP3 (mature and uncleaved precursor forms) or granzyme B (GZMB) relieves autoinhibition and is sufficient to initiate pyroptosis. In terms of processing, succination by the Krebs cycle intermediate fumarate, which leads to S-(2-succinyl)cysteine residues, inhibits processing by caspases, and ability to initiate pyroptosis. Succination modification is catalyzed by a non-enzymatic reaction caused by an accumulation of fumarate. Ubiquitinated on Lys-120 and Lys-189 via 'Lys-48'-linked polyubiquitin chains, leading to proteasomal degradation. Deubiquitinated by USP48, leading to increased stability. Post-translationally, palmitoylated. As to expression, expressed in spleen, kidney, large and small intestine, testicle, stomach and by CD4(+)CD(8+) T cells in thymus. Expressed by macrophages.

It is found in the cell membrane. The protein localises to the cytoplasm. Its subcellular location is the cytosol. The full-length protein before cleavage is inactive: intramolecular interactions between N- and C-terminal domains mediate autoinhibition in the absence of activation signal. The intrinsic pyroptosis-inducing activity is carried by the released N-terminal moiety (Gasdermin-E, N-terminal) following cleavage by CASP3 or granzyme B (GZMB). Activated by NLRP1 in the absence of GSDMD expression: NLRP1 cleaves and activates CASP8, promoting downstream activation of CASP3 and subsequent activation of GSDME. In terms of biological role, precursor of a pore-forming protein that converts non-inflammatory apoptosis to pyroptosis. This form constitutes the precursor of the pore-forming protein: upon cleavage, the released N-terminal moiety (Gasdermin-E, N-terminal) binds to membranes and forms pores, triggering pyroptosis. Functionally, pore-forming protein produced by cleavage by CASP3 or granzyme B (GZMB), which converts non-inflammatory apoptosis to pyroptosis or promotes granzyme-mediated pyroptosis, respectively. After cleavage, moves to the plasma membrane, homooligomerizes within the membrane and forms pores of 10-15 nanometers (nm) of inner diameter, allowing the release of mature interleukins (IL1B and IL16) and triggering pyroptosis. Binds to inner leaflet lipids, bisphosphorylated phosphatidylinositols, such as phosphatidylinositol (4,5)-bisphosphate. Cleavage by CASP3 switches CASP3-mediated apoptosis induced by TNF or danger signals, such as chemotherapy drugs, to pyroptosis. Mediates secondary necrosis downstream of the mitochondrial apoptotic pathway and CASP3 activation as well as in response to viral agents. Exhibits bactericidal activity. Cleavage by GZMB promotes tumor suppressor activity by triggering robust anti-tumor immunity. Suppresses tumors by mediating granzyme-mediated pyroptosis in target cells of natural killer (NK) cells: cleavage by granzyme B (GZMB), delivered to target cells from NK-cells, triggers pyroptosis of tumor cells and tumor suppression. May play a role in the p53/TP53-regulated cellular response to DNA damage. In Mus musculus (Mouse), this protein is Gasdermin-E.